The primary structure comprises 324 residues: Spheroidene monooxygenase (324 aa).

A disordered region spans residues glycine 226–alanine 324. Composition is skewed to low complexity over residues proline 248–proline 278 and valine 287–glycine 313.

The protein belongs to the CrtA family. Requires heme as cofactor.

It carries out the reaction spheroidene + 4 reduced [2Fe-2S]-[ferredoxin] + 2 O2 + 4 H(+) = spheroiden-2-one + 4 oxidized [2Fe-2S]-[ferredoxin] + 3 H2O. The enzyme catalyses spheroidene + 2 reduced [2Fe-2S]-[ferredoxin] + O2 + 2 H(+) = 2-hydroxyspheroidene + 2 oxidized [2Fe-2S]-[ferredoxin] + H2O. It catalyses the reaction 2-hydroxyspheroidene + 2 reduced [2Fe-2S]-[ferredoxin] + O2 + 2 H(+) = 2,2-dihydroxyspheroidene + 2 oxidized [2Fe-2S]-[ferredoxin] + H2O. The catalysed reaction is 2,2-dihydroxyspheroidene = spheroiden-2-one + H2O. It participates in carotenoid biosynthesis; spheroidene biosynthesis. In terms of biological role, involved in the biosynthesis of the carotenoid spheroidene. Catalyzes the introduction of one keto group at the C-2 position of spheroidene. In vitro, can use nonnative substrates and produce oxocarotenoids with a hydroxy and/or a keto group, derived from neurosporene, lycopene, 3,4-didehydrolycopene or 3,4,3',4'-tetradehydrolycopene. This is Spheroidene monooxygenase from Cereibacter sphaeroides (strain ATCC 17023 / DSM 158 / JCM 6121 / CCUG 31486 / LMG 2827 / NBRC 12203 / NCIMB 8253 / ATH 2.4.1.) (Rhodobacter sphaeroides).